The primary structure comprises 207 residues: Thiamine-phosphate synthase (207 aa).

Residues 36-40 (QLRMK) and asparagine 68 contribute to the 4-amino-2-methyl-5-(diphosphooxymethyl)pyrimidine site. Mg(2+) contacts are provided by aspartate 69 and aspartate 88. 4-amino-2-methyl-5-(diphosphooxymethyl)pyrimidine is bound at residue serine 106. 132-134 (TNT) is a 2-[(2R,5Z)-2-carboxy-4-methylthiazol-5(2H)-ylidene]ethyl phosphate binding site. Residue lysine 135 coordinates 4-amino-2-methyl-5-(diphosphooxymethyl)pyrimidine. 2-[(2R,5Z)-2-carboxy-4-methylthiazol-5(2H)-ylidene]ethyl phosphate contacts are provided by residues glycine 162 and 182–183 (VS).

The protein belongs to the thiamine-phosphate synthase family. It depends on Mg(2+) as a cofactor.

The enzyme catalyses 2-[(2R,5Z)-2-carboxy-4-methylthiazol-5(2H)-ylidene]ethyl phosphate + 4-amino-2-methyl-5-(diphosphooxymethyl)pyrimidine + 2 H(+) = thiamine phosphate + CO2 + diphosphate. The catalysed reaction is 2-(2-carboxy-4-methylthiazol-5-yl)ethyl phosphate + 4-amino-2-methyl-5-(diphosphooxymethyl)pyrimidine + 2 H(+) = thiamine phosphate + CO2 + diphosphate. It carries out the reaction 4-methyl-5-(2-phosphooxyethyl)-thiazole + 4-amino-2-methyl-5-(diphosphooxymethyl)pyrimidine + H(+) = thiamine phosphate + diphosphate. It participates in cofactor biosynthesis; thiamine diphosphate biosynthesis; thiamine phosphate from 4-amino-2-methyl-5-diphosphomethylpyrimidine and 4-methyl-5-(2-phosphoethyl)-thiazole: step 1/1. In terms of biological role, condenses 4-methyl-5-(beta-hydroxyethyl)thiazole monophosphate (THZ-P) and 2-methyl-4-amino-5-hydroxymethyl pyrimidine pyrophosphate (HMP-PP) to form thiamine monophosphate (TMP). The chain is Thiamine-phosphate synthase from Methanococcus maripaludis (strain C5 / ATCC BAA-1333).